Consider the following 241-residue polypeptide: Sugar fermentation stimulation protein homolog (241 aa).

The protein belongs to the SfsA family.

The protein is Sugar fermentation stimulation protein homolog of Trichormus variabilis (strain ATCC 29413 / PCC 7937) (Anabaena variabilis).